A 130-amino-acid polypeptide reads, in one-letter code: Small ribosomal subunit protein uS11 (130 aa).

The protein belongs to the universal ribosomal protein uS11 family. Part of the 30S ribosomal subunit. Interacts with proteins S7 and S18. Binds to IF-3.

Its function is as follows. Located on the platform of the 30S subunit, it bridges several disparate RNA helices of the 16S rRNA. Forms part of the Shine-Dalgarno cleft in the 70S ribosome. The polypeptide is Small ribosomal subunit protein uS11 (Shewanella sediminis (strain HAW-EB3)).